The primary structure comprises 301 residues: ATP synthase gamma chain (301 aa).

Belongs to the ATPase gamma chain family. F-type ATPases have 2 components, CF(1) - the catalytic core - and CF(0) - the membrane proton channel. CF(1) has five subunits: alpha(3), beta(3), gamma(1), delta(1), epsilon(1). CF(0) has three main subunits: a, b and c.

The protein resides in the cell inner membrane. Its function is as follows. Produces ATP from ADP in the presence of a proton gradient across the membrane. The gamma chain is believed to be important in regulating ATPase activity and the flow of protons through the CF(0) complex. The chain is ATP synthase gamma chain from Bordetella petrii (strain ATCC BAA-461 / DSM 12804 / CCUG 43448).